Here is a 180-residue protein sequence, read N- to C-terminus: NADH-quinone oxidoreductase subunit I (180 aa).

2 4Fe-4S ferredoxin-type domains span residues 48-80 (IVLTRDPDGDERCVACNLCAVACPVGCISLQKS) and 90-119 (EFFRINFSRCIFCGLCEEACPTTAIQLTPD). Residues cysteine 60, cysteine 63, cysteine 66, cysteine 70, cysteine 99, cysteine 102, cysteine 105, and cysteine 109 each coordinate [4Fe-4S] cluster. Over residues 161-174 (KPKGDAENEAKPID) the composition is skewed to basic and acidic residues. A disordered region spans residues 161–180 (KPKGDAENEAKPIDVKSLLP).

The protein belongs to the complex I 23 kDa subunit family. As to quaternary structure, NDH-1 is composed of 13 different subunits. Subunits NuoA, H, J, K, L, M, N constitute the membrane sector of the complex. [4Fe-4S] cluster serves as cofactor.

Its subcellular location is the cell inner membrane. It catalyses the reaction a quinone + NADH + 5 H(+)(in) = a quinol + NAD(+) + 4 H(+)(out). Its function is as follows. NDH-1 shuttles electrons from NADH, via FMN and iron-sulfur (Fe-S) centers, to quinones in the respiratory chain. The immediate electron acceptor for the enzyme in this species is believed to be ubiquinone. Couples the redox reaction to proton translocation (for every two electrons transferred, four hydrogen ions are translocated across the cytoplasmic membrane), and thus conserves the redox energy in a proton gradient. This chain is NADH-quinone oxidoreductase subunit I, found in Shewanella oneidensis (strain ATCC 700550 / JCM 31522 / CIP 106686 / LMG 19005 / NCIMB 14063 / MR-1).